The sequence spans 276 residues: Rhomboid protease GlpG (276 aa).

6 consecutive transmembrane segments (helical) span residues 94-114 (GPVT…MQIL), 142-162 (ALMH…WYLG), 169-189 (LGSG…GYVQ), 192-212 (FSGP…GYVW), 229-249 (LIIF…GMSM), and 250-270 (ANGA…VDSL). The active-site Nucleophile is Ser-201. Residue His-254 is part of the active site.

Belongs to the peptidase S54 family.

Its subcellular location is the cell inner membrane. The enzyme catalyses Cleaves type-1 transmembrane domains using a catalytic dyad composed of serine and histidine that are contributed by different transmembrane domains.. Its function is as follows. Rhomboid-type serine protease that catalyzes intramembrane proteolysis. In Shigella flexneri serotype 5b (strain 8401), this protein is Rhomboid protease GlpG.